The sequence spans 177 residues: Large ribosomal subunit protein uL6 (177 aa).

The protein belongs to the universal ribosomal protein uL6 family. As to quaternary structure, part of the 50S ribosomal subunit.

In terms of biological role, this protein binds to the 23S rRNA, and is important in its secondary structure. It is located near the subunit interface in the base of the L7/L12 stalk, and near the tRNA binding site of the peptidyltransferase center. The protein is Large ribosomal subunit protein uL6 of Leptothrix cholodnii (strain ATCC 51168 / LMG 8142 / SP-6) (Leptothrix discophora (strain SP-6)).